A 48-amino-acid polypeptide reads, in one-letter code: Large ribosomal subunit protein bL33B (48 aa).

It belongs to the bacterial ribosomal protein bL33 family.

This is Large ribosomal subunit protein bL33B from Lactococcus lactis subsp. cremoris (strain MG1363).